Reading from the N-terminus, the 189-residue chain is Fine tangled pili major subunit (189 aa).

Belongs to the Dps family. In terms of assembly, hexamer.

Its subcellular location is the fimbrium. May contribute to bacterial adherence, or be involved in the protection of the bacteria, or both. This chain is Fine tangled pili major subunit (ftpA), found in Haemophilus ducreyi (strain 35000HP / ATCC 700724).